The chain runs to 332 residues: Holliday junction branch migration complex subunit RuvB (332 aa).

Positions 1–181 are large ATPase domain (RuvB-L); that stretch reads MERIISELEM…FGVSHKMEYY (181 aa). ATP-binding residues include L20, R21, G62, K65, T66, T67, R171, Y181, and R218. Residue T66 coordinates Mg(2+). The interval 182–252 is small ATPAse domain (RuvB-S); sequence NENEIKSIII…SAKNALDMLG (71 aa). Positions 255–332 are head domain (RuvB-H); sequence SNGLDDLDRN…QHFKKVEVKI (78 aa). Residues R291, R310, and R315 each contribute to the DNA site.

Belongs to the RuvB family. Homohexamer. Forms an RuvA(8)-RuvB(12)-Holliday junction (HJ) complex. HJ DNA is sandwiched between 2 RuvA tetramers; dsDNA enters through RuvA and exits via RuvB. An RuvB hexamer assembles on each DNA strand where it exits the tetramer. Each RuvB hexamer is contacted by two RuvA subunits (via domain III) on 2 adjacent RuvB subunits; this complex drives branch migration. In the full resolvosome a probable DNA-RuvA(4)-RuvB(12)-RuvC(2) complex forms which resolves the HJ.

It localises to the cytoplasm. The catalysed reaction is ATP + H2O = ADP + phosphate + H(+). Its function is as follows. The RuvA-RuvB-RuvC complex processes Holliday junction (HJ) DNA during genetic recombination and DNA repair, while the RuvA-RuvB complex plays an important role in the rescue of blocked DNA replication forks via replication fork reversal (RFR). RuvA specifically binds to HJ cruciform DNA, conferring on it an open structure. The RuvB hexamer acts as an ATP-dependent pump, pulling dsDNA into and through the RuvAB complex. RuvB forms 2 homohexamers on either side of HJ DNA bound by 1 or 2 RuvA tetramers; 4 subunits per hexamer contact DNA at a time. Coordinated motions by a converter formed by DNA-disengaged RuvB subunits stimulates ATP hydrolysis and nucleotide exchange. Immobilization of the converter enables RuvB to convert the ATP-contained energy into a lever motion, pulling 2 nucleotides of DNA out of the RuvA tetramer per ATP hydrolyzed, thus driving DNA branch migration. The RuvB motors rotate together with the DNA substrate, which together with the progressing nucleotide cycle form the mechanistic basis for DNA recombination by continuous HJ branch migration. Branch migration allows RuvC to scan DNA until it finds its consensus sequence, where it cleaves and resolves cruciform DNA. This is Holliday junction branch migration complex subunit RuvB from Fusobacterium nucleatum subsp. nucleatum (strain ATCC 25586 / DSM 15643 / BCRC 10681 / CIP 101130 / JCM 8532 / KCTC 2640 / LMG 13131 / VPI 4355).